Reading from the N-terminus, the 260-residue chain is Late transcription factor 1 (260 aa).

Belongs to the chordopoxvirinae VLTF-1 family. As to quaternary structure, interacts with the late transcription factors VLTF-2 and VLTF-3. Interacts with the late transcription elongation factor VLTF-4. Interacts with itself.

Functionally, associates with RNA polymerase to initiate transcription from late gene promoters. The protein is Late transcription factor 1 (OPG093) of Homo sapiens (Human).